Consider the following 459-residue polypeptide: Argininosuccinate lyase (459 aa).

Belongs to the lyase 1 family. Argininosuccinate lyase subfamily.

Its subcellular location is the cytoplasm. It carries out the reaction 2-(N(omega)-L-arginino)succinate = fumarate + L-arginine. Its pathway is amino-acid biosynthesis; L-arginine biosynthesis; L-arginine from L-ornithine and carbamoyl phosphate: step 3/3. The polypeptide is Argininosuccinate lyase (Prochlorococcus marinus (strain AS9601)).